A 127-amino-acid chain; its full sequence is Large ribosomal subunit protein bL17 (127 aa).

It belongs to the bacterial ribosomal protein bL17 family. Part of the 50S ribosomal subunit. Contacts protein L32.

In Lactobacillus gasseri (strain ATCC 33323 / DSM 20243 / BCRC 14619 / CIP 102991 / JCM 1131 / KCTC 3163 / NCIMB 11718 / NCTC 13722 / AM63), this protein is Large ribosomal subunit protein bL17.